We begin with the raw amino-acid sequence, 407 residues long: Phosphopentomutase (407 aa).

Mn(2+) is bound by residues aspartate 10, aspartate 306, histidine 311, aspartate 347, histidine 348, and histidine 359.

Belongs to the phosphopentomutase family. The cofactor is Mn(2+).

It is found in the cytoplasm. It carries out the reaction 2-deoxy-alpha-D-ribose 1-phosphate = 2-deoxy-D-ribose 5-phosphate. The catalysed reaction is alpha-D-ribose 1-phosphate = D-ribose 5-phosphate. It functions in the pathway carbohydrate degradation; 2-deoxy-D-ribose 1-phosphate degradation; D-glyceraldehyde 3-phosphate and acetaldehyde from 2-deoxy-alpha-D-ribose 1-phosphate: step 1/2. In terms of biological role, isomerase that catalyzes the conversion of deoxy-ribose 1-phosphate (dRib-1-P) and ribose 1-phosphate (Rib-1-P) to deoxy-ribose 5-phosphate (dRib-5-P) and ribose 5-phosphate (Rib-5-P), respectively. This chain is Phosphopentomutase, found in Yersinia pestis bv. Antiqua (strain Angola).